Reading from the N-terminus, the 171-residue chain is Endoribonuclease YbeY (171 aa).

The Zn(2+) site is built by H126, H130, and H136.

This sequence belongs to the endoribonuclease YbeY family. Zn(2+) serves as cofactor.

The protein resides in the cytoplasm. Its function is as follows. Single strand-specific metallo-endoribonuclease involved in late-stage 70S ribosome quality control and in maturation of the 3' terminus of the 16S rRNA. This is Endoribonuclease YbeY from Rhizobium johnstonii (strain DSM 114642 / LMG 32736 / 3841) (Rhizobium leguminosarum bv. viciae).